We begin with the raw amino-acid sequence, 430 residues long: UDP-N-acetylglucosamine 1-carboxyvinyltransferase (430 aa).

A phosphoenolpyruvate-binding site is contributed by 22-23 (KN). R102 serves as a coordination point for UDP-N-acetyl-alpha-D-glucosamine. C126 functions as the Proton donor in the catalytic mechanism. The residue at position 126 (C126) is a 2-(S-cysteinyl)pyruvic acid O-phosphothioketal. UDP-N-acetyl-alpha-D-glucosamine contacts are provided by residues 131-135 (RPVDL), 172-175 (KVSV), D317, and I339.

It belongs to the EPSP synthase family. MurA subfamily.

It is found in the cytoplasm. The catalysed reaction is phosphoenolpyruvate + UDP-N-acetyl-alpha-D-glucosamine = UDP-N-acetyl-3-O-(1-carboxyvinyl)-alpha-D-glucosamine + phosphate. It participates in cell wall biogenesis; peptidoglycan biosynthesis. Functionally, cell wall formation. Adds enolpyruvyl to UDP-N-acetylglucosamine. In Allorhizobium ampelinum (strain ATCC BAA-846 / DSM 112012 / S4) (Agrobacterium vitis (strain S4)), this protein is UDP-N-acetylglucosamine 1-carboxyvinyltransferase.